The sequence spans 2448 residues: MNFHKGQPKEDLRVLFGPQCPDITDSITHIRDAISKDPTGLGFLTNILDELPSLWPTIAGAWPALKNVEGESQLLALGRLFEHESEDRVEASNLMMTPITVMRHIVDFWNLQDVATHPAFPSSSLSETEMPRIVDTQGFCVGLLAAIAVACSRNTQEFQYVASNAIRLSLCVGALVDLDEILCGSTTSLAVSAERVKQEIHDHGLRTKQLSLRGRFHHEAHREGIQHIMKLCTNDSRFKLPRSDALLTPLRSSQGGEIFQQEALLHTVALDSILCAKANWYDVVSALINSTEMTVDQSHLLSIGPEEFVPRSARSRSVARRELQSYAMQGFSNESPQPSTASLSNSVQTFDSRPQAAEASPIAITGMACRYPNADTLAQLWDLLELGRCTVKSPPESRFHMSDLQREPKGPFWGHFLERPDVFDHRFFNISAREAESMDPQQRVALQVAYEAMESAGYLGWQPNGLSRDIGCYVGVGSEDYTENVASRNANAFSITGTLQSFIAGRISHHFGWSGPSISLDTACSSAAVAIHLACKALQTNDCKIALAGGVNVLTNPRVYQNLSAASFLSPSGACKPFDASADGYCRGEGAGLFVLRPLQDAIDNGDPILGVIAGSAVNQGSNNSPITVPDAEAQRSLYNKAMSLAGVSPDEVTYVEAHGTGTQVGDPIELDSLRRTFGGPQRRNSLHIGSIKGNIGHTETSSGAAGLLKTILMLQQQRIPRQANFNQLNPKVKSLTPDRLVIASESTEWASTERVAMVSNYGASGSNAALIVKEHAPIRSEQNGTAPEYIQNVPILVSARSEESLRAYCGALRATLLSHPPSETLVQKLAYNLAMKQNRDLPLNLTFSTSSDATSLSARLEAISTGASADLIQKRPSNEPPVVLCFGGQNGLTATISKEVFDASALLRTHLEDCEEVGRTLGLPSLFPTIFSSAPITNIIHLHFILFSIQYASAKAWLDSGLRVSRIVGHSFGQLTALSVAGSLSVRDGIHLVTERARLIESSWGPESGIMLAVEGTDIEVQQLLDQTGHIADVACYNGPRQQVLAGTAESIAAIENAAARTPSASKLRLTRLQNSHAFHSRLVDSIVPAIMEVAGSLVYQTPIIPIEACSASGDWSTITAAEIVEHSRMPVYFRRAVERVAEKLQAPAVWLEAGSASPIIPMVRRVLESSSVANTYHKIDLGGSSGAQNLANVTSALWAQGVHVQFWPFDRAQHGSFKWMNLPPYQFAQNSHWVDFDPAAFSSAGPSSGKQSAGQEAGLLCQLSESPDERLYHVNIQDALYRACTQGHAVLNQTLCPASMYMEMVLRAAASIFPTGNASEPAMSHIEDLTISSPLVLDPQGDVFLRLTSDGAGPTRPWLFSIFSSESNDHTSVHAEGTVCLHQERSRALARFQSMDRLLDSARSKTIEADPASNGLKGSTVYAALESVTNYGDYFRGVKKVFANGREASGLVSMMPSASETNCDPILLDNFLQVAGIHVNCLSDRRSSEVFVCNAIGETFVINSLLKQKNGASPSTWKVYTSYVRPSKTEIACDIYVMDCQTDTLSAAMMGVRFTSVSIRSLTRALAKLNNNVLETAEAQSVVEPAIPAEKSVVTATPSAPAADGGGAKDLATVQEMLCELFGVSVAEVSPSVSLVDIGVDSLMSTEVLSEIKKRFQVDMSYTTLVDIPNIQGLVEHIFPGHSHAAPSQPVVETAPVQSVAPQAVSHVPTPANNGPPLVSVARQCFDTTHAAVSHTSDAHWTGFFHTTYPKQMTLLTAYILEAFRALGSPLEASEPNEVLIPISVLPRHEQLRKHLYKILESVGLVRQMPTGELVRTTTPIPLSQSHDLHTQIRAEYPPYALEHDLLQITAPRLADCLTGKADGVSLIFQDANTRRLVGDVYAQSPVFKSGNLYLARYLLDVVQSFGSSRTIKILEIGAGTGGTTKNLLEKLSTIPGLSTRLEYTFTDISPSLVAAGRKTFANYNFMRYETLNVENDPPSALSGQYDIVLSTNCVHATRNLRESCTNIRKLLRPDGILCLVELTRDIFWLDLVFGLLEGWWRFEDGREHALATEMMWDQTLRQSGFEWVDWTNNETVESNALRVIVASPTGNSSTATMSPSKLTKMETVVWGERDNLQLRADIYYPETVDTTRKQRPIALMIHGGGHVMLSRKDIRPAQTQTLLDAGFLPVSIDYRLCPEVSLAEGPMADARDALSWVRRVLPNIPLLRADIRPDGNQVVAIGWSTGGHLAMTLPFTAPAAGISAPNAVLAFYCPTNYEDPFWSNPNFPFGQTVASNEMEYDVWEGLQSMPIAGYNPALKERPLGGWMSTRDPRSRIALHMNWTGQTLPVLLKACTIKGNTEKCSPDDLSRPTEEEIQAVSPNYQIRVGRYNTPTFLIHGTSDDLVPCAQTESTHGALTASGVEAELRVVQEAAHLFDLYPASHAGQEAKAAVAEGYEFLRRHVQL.

Positions 14–226 (VLFGPQCPDI…HHEAHREGIQ (213 aa)) are N-terminal acylcarrier protein transacylase domain (SAT). Residues 330–350 (GFSNESPQPSTASLSNSVQTF) are disordered. The Ketosynthase family 3 (KS3) domain maps to 359–775 (ASPIAITGMA…GSNAALIVKE (417 aa)). Active-site for beta-ketoacyl synthase activity residues include Cys524, His659, and His698. The malonyl-CoA:ACP transacylase (MAT) domain stretch occupies residues 885–1188 (LCFGGQNGLT…HKIDLGGSSG (304 aa)). The active-site For acyl/malonyl transferase activity is the Ser972. The N-terminal hotdog fold stretch occupies residues 1256–1388 (GQEAGLLCQL…GTVCLHQERS (133 aa)). The PKS/mFAS DH domain maps to 1256–1565 (GQEAGLLCQL…FTSVSIRSLT (310 aa)). Residues 1261 to 1564 (LLCQLSESPD…RFTSVSIRSL (304 aa)) are product template (PT) domain. His1290 acts as the Proton acceptor; for dehydratase activity in catalysis. The interval 1414 to 1565 (ASNGLKGSTV…FTSVSIRSLT (152 aa)) is C-terminal hotdog fold. Residue Asp1471 is the Proton donor; for dehydratase activity of the active site. Residues 1610–1684 (AKDLATVQEM…GLVEHIFPGH (75 aa)) form the Carrier domain. The residue at position 1644 (Ser1644) is an O-(pantetheine 4'-phosphoryl)serine. The tract at residues 1841-2076 (PYALEHDLLQ…GFEWVDWTNN (236 aa)) is methyltransferase (CMeT) domain. Catalysis depends on for thioesterase activity residues Ser2227, Asp2385, and His2417.

It is found in the cytoplasm. It localises to the cytosol. It carries out the reaction 3 malonyl-CoA + acetyl-CoA + S-adenosyl-L-methionine + H(+) = 5-methylorsellinate + S-adenosyl-L-homocysteine + 3 CO2 + 4 CoA. It functions in the pathway secondary metabolite biosynthesis; terpenoid biosynthesis. Functionally, non-reducing polyketide synthase; part of the gene cluster that mediates the biosynthesis of mycophenolic acid (MPA), the first isolated antibiotic natural product in the world obtained from a culture of Penicillium brevicompactum in 1893. MpaC catalyzes the synthesis of 5-methylorsellinic acid (5MOA) via the condensation of 1 acetyl-CoA starter unit with 3 malonyl-CoA units and one methylation step. The first step of the pathway is the synthesis of 5-methylorsellinic acid (5MOA) by the cytosolic polyketide synthase mpaC. 5MOA is then converted to the phthalide compound 5,7-dihydroxy-4,6-dimethylphthalide (DHMP) by the endoplasmic reticulum-bound cytochrome P450 monooxygenase mpaDE. MpaDE first catalyzes hydroxylation of 5-MOA to 4,6-dihydroxy-2-(hydroxymethyl)-3-methylbenzoic acid (DHMB). MpaDE then acts as a lactone synthase that catalyzes the ring closure to convert DHMB into DHMP. The next step is the prenylation of DHMP by the Golgi apparatus-associated prenyltransferase mpaA to yield farnesyl-DHMP (FDHMP). The ER-bound oxygenase mpaB then mediates the oxidative cleavage the C19-C20 double bond in FDHMP to yield FDHMP-3C via a mycophenolic aldehyde intermediate. The O-methyltransferase mpaG catalyzes the methylation of FDHMP-3C to yield MFDHMP-3C. After the cytosolic methylation of FDHMP-3C, MFDHMP-3C enters into peroxisomes probably via free diffusion due to its low molecular weight. Upon a peroxisomal CoA ligation reaction, catalyzed by a beta-oxidation component enzyme acyl-CoA ligase ACL891, MFDHMP-3C-CoA would then be restricted to peroxisomes for the following beta-oxidation pathway steps. The peroxisomal beta-oxidation machinery than converts MFDHMP-3C-CoA into MPA_CoA, via a beta-oxidation chain-shortening process. Finally mpaH acts as a peroxisomal acyl-CoA hydrolase with high substrate specificity toward MPA-CoA to release the final product MPA. The chain is Non-reducing polyketide synthase mapC from Penicillium brevicompactum.